Consider the following 789-residue polypeptide: Potassium transporter 4 (789 aa).

Residues 1-32 lie on the Cytoplasmic side of the membrane; that stretch reads MAPAESGVSPRRNPSQLSWMNLSSNLILAYQS. At Ser9 the chain carries Phosphoserine. Residues 33–53 form a helical membrane-spanning segment; the sequence is FGVVYGDLSTSPLYVFPSTFI. Topologically, residues 54–68 are extracellular; sequence GKLHKHHNEDAVFGA. A helical membrane pass occupies residues 69–89; it reads FSLIFWTLTLIPLLKYLLVLL. Topologically, residues 90-154 are cytoplasmic; that stretch reads SADDNGEGGT…FLEKHKRLRT (65 aa). A helical transmembrane segment spans residues 155-175; it reads ALLLVVLFGAAMVIGDGVLTP. Topologically, residues 176–195 are extracellular; sequence ALSVLSSLSGLQATEKNVTD. A helical membrane pass occupies residues 196-216; the sequence is GELLVLACVILVGLFALQHCG. Residues 217–219 are Cytoplasmic-facing; it reads THR. A helical transmembrane segment spans residues 220–240; the sequence is VAFMFAPIVIIWLISIFFIGL. The Extracellular segment spans residues 241-270; that stretch reads YNIIRWNPKIIHAVSPLYIIKFFRVTGQDG. A helical membrane pass occupies residues 271 to 291; that stretch reads WISLGGVLLSVTGTEAMFANL. Over 292–300 the chain is Cytoplasmic; sequence GHFTSVSIR. A helical membrane pass occupies residues 301–321; that stretch reads VAFAVVVYPCLVVQYMGQAAF. At 322 to 340 the chain is on the extracellular side; it reads LSKNLGSIPNSFYDSVPDP. Residues 341–361 traverse the membrane as a helical segment; sequence VFWPVFVIATLAAIVGSQAVI. At 362 to 392 the chain is on the cytoplasmic side; it reads TTTFSIIKQCHALGCFPRIKVVHTSKHIYGQ. The chain crosses the membrane as a helical span at residues 393–413; the sequence is IYIPEINWILMILTLAMAIGF. Residues 414–424 lie on the Extracellular side of the membrane; the sequence is RDTTLIGNAYG. Residues 425–445 form a helical membrane-spanning segment; that stretch reads IACMVVMFITTFFMALVIVVV. Over 446 to 450 the chain is Cytoplasmic; it reads WQKSC. Residues 451-471 traverse the membrane as a helical segment; it reads FLAALFLGTLWIIEGVYLSAA. The Extracellular portion of the chain corresponds to 472–478; that stretch reads LMKVTEG. The helical transmembrane segment at 479 to 499 threads the bilayer; it reads GWVPFVLTFIFMIAMYVWHYG. The Cytoplasmic segment spans residues 500-789; it reads TRRKYSFDLH…LIEVGMIYYV (290 aa).

This sequence belongs to the HAK/KUP transporter (TC 2.A.72.3) family. In terms of tissue distribution, detected at very low levels in roots, stems, leaves and flowers of mature plants and strongly expressed in the roots of potassium-starved plants.

It localises to the cell membrane. In terms of biological role, high-affinity potassium transporter. This chain is Potassium transporter 4 (POT4), found in Arabidopsis thaliana (Mouse-ear cress).